The primary structure comprises 185 residues: NADH-ubiquinone oxidoreductase chain 6 (185 aa).

Transmembrane regions (helical) follow at residues 4 to 24 (LTYY…IFII), 33 to 53 (ILYM…IGLG), 54 to 74 (IFSL…FLFI), 94 to 114 (LPLV…IYSN), and 159 to 179 (AFIL…PISI).

It belongs to the complex I subunit 6 family. Complex I is composed of 37 different subunits.

Its subcellular location is the mitochondrion membrane. The catalysed reaction is a ubiquinone + NADH + 5 H(+)(in) = a ubiquinol + NAD(+) + 4 H(+)(out). Core subunit of the mitochondrial membrane respiratory chain NADH dehydrogenase (Complex I) that is believed to belong to the minimal assembly required for catalysis. Complex I functions in the transfer of electrons from NADH to the respiratory chain. The immediate electron acceptor for the enzyme is believed to be ubiquinone. This is NADH-ubiquinone oxidoreductase chain 6 (ND6) from Yarrowia lipolytica (strain CLIB 122 / E 150) (Yeast).